The primary structure comprises 865 residues: Protein translocase subunit SecA (865 aa).

Residues Q93, G111–T115, and D501 contribute to the ATP site. Zn(2+) is bound by residues C841, C843, C852, and C853.

It belongs to the SecA family. Monomer and homodimer. Part of the essential Sec protein translocation apparatus which comprises SecA, SecYEG and auxiliary proteins SecDF-YajC and YidC. The cofactor is Zn(2+).

The protein resides in the cell inner membrane. The protein localises to the cytoplasm. The enzyme catalyses ATP + H2O + cellular proteinSide 1 = ADP + phosphate + cellular proteinSide 2.. Its function is as follows. Part of the Sec protein translocase complex. Interacts with the SecYEG preprotein conducting channel. Has a central role in coupling the hydrolysis of ATP to the transfer of proteins into and across the cell membrane, serving as an ATP-driven molecular motor driving the stepwise translocation of polypeptide chains across the membrane. This chain is Protein translocase subunit SecA, found in Helicobacter acinonychis (strain Sheeba).